Reading from the N-terminus, the 351-residue chain is MVHQLSLVSSIPHNKYLQTISTLQALTGLIQPESISTYTLLAKPSYAFKPKFEPGKVNQIEQYYMRCITTWNSDKQGDDEKVEKGFDISEPFINKESNIVVRKLFTEEDSVERVWTLQVSDIPVAGKNQGCCQQQIYESTLVHTHTAIEIKVGNGDPIDIDTNNDKQGDNNTDKPKQEHDGKLPEAIDEDIIKNGDEKKTTHDDNDSDIMEIDEPNPETQTLPQSLSNGVSQRTTRKDSFLIFLSDLGYEVINQYWQKGVRFFYGDIIIEIYKIFIRDESSQADSNEGIKLKLLDDSNQFQIKAYININKSTEIDSINSGVKELIKLQEFLKNLFVLEIPDRMFMDSRIKQ.

The interval 153–231 (GNGDPIDIDT…LPQSLSNGVS (79 aa)) is disordered. A compositionally biased stretch (basic and acidic residues) spans 163-204 (NNDKQGDNNTDKPKQEHDGKLPEAIDEDIIKNGDEKKTTHDD). Positions 205–216 (NDSDIMEIDEPN) are enriched in acidic residues. Polar residues predominate over residues 217–231 (PETQTLPQSLSNGVS).

Belongs to the Mediator complex subunit 18 family. In terms of assembly, component of the Mediator complex.

Its subcellular location is the nucleus. Functionally, component of the Mediator complex, a coactivator involved in the regulated transcription of nearly all RNA polymerase II-dependent genes. Mediator functions as a bridge to convey information from gene-specific regulatory proteins to the basal RNA polymerase II transcription machinery. Mediator is recruited to promoters by direct interactions with regulatory proteins and serves as a scaffold for the assembly of a functional preinitiation complex with RNA polymerase II and the general transcription factors. This Candida albicans (strain SC5314 / ATCC MYA-2876) (Yeast) protein is Mediator of RNA polymerase II transcription subunit 18 (SRB5).